The primary structure comprises 134 residues: Arginine decarboxylase proenzyme (134 aa).

The Schiff-base intermediate with substrate; via pyruvic acid role is filled by Ser-82. Ser-82 is subject to Pyruvic acid (Ser); by autocatalysis. The Proton acceptor; for processing activity role is filled by His-87. Residue Cys-102 is the Proton donor; for catalytic activity of the active site.

It belongs to the prokaryotic AdoMetDC family. Type 1 subfamily. In terms of assembly, heterooctamer of four alpha and four beta chains arranged as a tetramer of alpha/beta heterodimers. Pyruvate serves as cofactor. Is synthesized initially as an inactive proenzyme. Formation of the active enzyme involves a self-maturation process in which the active site pyruvoyl group is generated from an internal serine residue via an autocatalytic post-translational modification. Two non-identical subunits are generated from the proenzyme in this reaction, and the pyruvate is formed at the N-terminus of the alpha chain, which is derived from the carboxyl end of the proenzyme. The post-translation cleavage follows an unusual pathway, termed non-hydrolytic serinolysis, in which the side chain hydroxyl group of the serine supplies its oxygen atom to form the C-terminus of the beta chain, while the remainder of the serine residue undergoes an oxidative deamination to produce ammonia and the pyruvoyl group blocking the N-terminus of the alpha chain.

The catalysed reaction is L-arginine + H(+) = agmatine + CO2. It participates in amine and polyamine biosynthesis; agmatine biosynthesis; agmatine from L-arginine: step 1/1. Functionally, specifically catalyzes the decarboxylation of L-arginine to agmatine. Has no S-adenosylmethionine decarboxylase (AdoMetDC) activity. This Caldivirga maquilingensis (strain ATCC 700844 / DSM 13496 / JCM 10307 / IC-167) protein is Arginine decarboxylase proenzyme.